Reading from the N-terminus, the 193-residue chain is Putative manganese efflux pump MntP (193 aa).

6 consecutive transmembrane segments (helical) span residues 3–23 (IFAV…VAVV), 41–61 (AAFG…GVSV), 69–89 (DHWI…LSGL), 107–127 (AGRN…AVGL), 130–150 (AILG…CAVI), and 164–184 (LCAL…AIAC).

Belongs to the MntP (TC 9.B.29) family.

The protein resides in the cell inner membrane. In terms of biological role, probably functions as a manganese efflux pump. The polypeptide is Putative manganese efflux pump MntP (Desulfovibrio desulfuricans (strain ATCC 27774 / DSM 6949 / MB)).